A 1630-amino-acid chain; its full sequence is Probable phosphoinositide phosphatase SAC9 (1630 aa).

Residues 147–527 enclose the SAC domain; sequence LTELDIDGKH…ADAVTGKSYY (381 aa). The Phosphatase catalytic core; degenerate signature appears at 456–467; that stretch reads RFNCADSLDRTN. Residues 508–542 enclose the WW domain; that stretch reads APLPPGWEKRADAVTGKSYYIDHNTKTTTWSHPCP.

In terms of tissue distribution, ubiquitous. Most abundant in the roots with lower expression levels throughout the leaves and shoot.

In terms of biological role, probable phosphoinositide phosphatase that could be involved in stress signaling. The chain is Probable phosphoinositide phosphatase SAC9 (SAC9) from Arabidopsis thaliana (Mouse-ear cress).